The primary structure comprises 84 residues: Large ribosomal subunit protein bL31B-2 (84 aa).

Belongs to the bacterial ribosomal protein bL31 family. Type B subfamily. In terms of assembly, part of the 50S ribosomal subunit.

The chain is Large ribosomal subunit protein bL31B-2 from Streptomyces coelicolor (strain ATCC BAA-471 / A3(2) / M145).